We begin with the raw amino-acid sequence, 101 residues long: MKVTDVRLRKIQTDGRMKALVSITLDESFVVHDLRVIEGNTGLFVAMPSKRTPDGEFRDIAHPINSEMRQEIQDAVMKVYEETDEVIPDRNAQSSDDSEEA.

Belongs to the SpoVG family.

Functionally, could be involved in septation. The protein is Putative septation protein SpoVG of Staphylococcus saprophyticus subsp. saprophyticus (strain ATCC 15305 / DSM 20229 / NCIMB 8711 / NCTC 7292 / S-41).